The chain runs to 316 residues: MASLKVPATVPLPEEDAEQLYKAFKGWGTNERMIISILAHRNATQRSFIRAVYAANYNKDLLKELDRELSGDFERAVMLWTFEPAERDAYLAKESTKMFTKNNWVLVEIACTRSALELFNAKQAYQARYKTSLEEDVAYHTSGDIRKLLVPLVSTFRYDGDEVNMTLARSEAKILHEKIKEKAYADDDLIRILTTRSKAQISATLNHYKNNFGTSMSKYLKEDSENEYIQLLKAVIKCLTYPEKYFEKVLRQAINKLGTDEWGLTRVVTTRAEFDMERIKEEYIRRNSVPLDRAIAKDTHGDYEDILLALLGHDHA.

At alanine 2 the chain carries N-acetylalanine. Annexin repeat units follow at residues proline 11 to phenylalanine 82, glutamate 83 to serine 154, threonine 166 to lysine 237, and tyrosine 241 to glycine 312. Ca(2+) is bound by residues phenylalanine 24, glycine 26, glycine 28, and glutamate 68. The residue at position 95 (serine 95) is a Phosphoserine. A phosphothreonine mark is found at threonine 100 and threonine 112. Tyrosine 129 bears the Phosphotyrosine mark. Ca(2+)-binding residues include isoleucine 254 and glycine 258. Tyrosine 283 carries the post-translational modification Phosphotyrosine. Serine 288 is subject to Phosphoserine. Ca(2+) is bound by residues aspartate 298, threonine 299, and glutamate 304.

It belongs to the annexin (TC 1.A.31.1) family. Expressed in flowers.

In Arabidopsis thaliana (Mouse-ear cress), this protein is Annexin D7 (ANNAT7).